The primary structure comprises 506 residues: Maturase K (506 aa).

The protein belongs to the intron maturase 2 family. MatK subfamily.

The protein localises to the plastid. It localises to the chloroplast. In terms of biological role, usually encoded in the trnK tRNA gene intron. Probably assists in splicing its own and other chloroplast group II introns. The protein is Maturase K of Rhododendron ferrugineum (Alpenrose).